A 130-amino-acid polypeptide reads, in one-letter code: MYRAVTRNIEVQVRPFYLEDRSDPSENRYVWGYQITIDNQSDEFVQLLSRYWHITDGAGRVEEVRGPGVVGDQPELNPGDSYQYTSGCPLSTPSGIMVGHYTMRNKRGETFDIAIPAFSLDLPGTRRTVN.

One can recognise an ApaG domain in the interval 3 to 127; sequence RAVTRNIEVQ…FSLDLPGTRR (125 aa).

The polypeptide is Protein ApaG (Mesorhizobium japonicum (strain LMG 29417 / CECT 9101 / MAFF 303099) (Mesorhizobium loti (strain MAFF 303099))).